A 445-amino-acid chain; its full sequence is Putative aldehyde dehydrogenase AldX (445 aa).

Catalysis depends on residues E214 and C248.

It belongs to the aldehyde dehydrogenase family.

The enzyme catalyses an aldehyde + NAD(+) + H2O = a carboxylate + NADH + 2 H(+). This is Putative aldehyde dehydrogenase AldX (aldX) from Bacillus subtilis (strain 168).